We begin with the raw amino-acid sequence, 120 residues long: Small ribosomal subunit protein bS16 (120 aa).

Residues 81 to 120 (GLAKRPARNNPQKAEPGEKSKERAAKRAEKAAAPAEDAAA) form a disordered region. A compositionally biased stretch (basic and acidic residues) spans 95-110 (EPGEKSKERAAKRAEK). The segment covering 111-120 (AAAPAEDAAA) has biased composition (low complexity).

The protein belongs to the bacterial ribosomal protein bS16 family.

This Methylorubrum populi (strain ATCC BAA-705 / NCIMB 13946 / BJ001) (Methylobacterium populi) protein is Small ribosomal subunit protein bS16.